The chain runs to 271 residues: Thiosulfate sulfurtransferase (271 aa).

Rhodanese domains are found at residues 21–129 and 159–270; these read SAPE…PLSR and GAAD…TPVE. Cysteine 230 functions as the Cysteine persulfide intermediate in the catalytic mechanism. Substrate is bound at residue arginine 235.

The protein resides in the cytoplasm. The catalysed reaction is thiosulfate + hydrogen cyanide = thiocyanate + sulfite + 2 H(+). This chain is Thiosulfate sulfurtransferase (rhdA), found in Azotobacter vinelandii.